Here is a 205-residue protein sequence, read N- to C-terminus: Dephospho-CoA kinase (205 aa).

The DPCK domain maps to 6-205; the sequence is RIGLTGGIAA…EIYAGWCAGR (200 aa). 14–19 contributes to the ATP binding site; sequence AAGKST.

This sequence belongs to the CoaE family.

The protein resides in the cytoplasm. The catalysed reaction is 3'-dephospho-CoA + ATP = ADP + CoA + H(+). The protein operates within cofactor biosynthesis; coenzyme A biosynthesis; CoA from (R)-pantothenate: step 5/5. Its function is as follows. Catalyzes the phosphorylation of the 3'-hydroxyl group of dephosphocoenzyme A to form coenzyme A. The protein is Dephospho-CoA kinase of Bifidobacterium longum (strain NCC 2705).